The sequence spans 329 residues: MLGSVTDFLKPRLVDIEQLSPTHAKVTLEPLERGFGHTLGNALRRILLSSMPGCAVAEVEIDGVLHEYSSKEGVQEDILEILLNLKGIAVKLEGKDEVILSLTKSGAGPVTAGDIIHGDDVVIVNPEHVICHLTGANAEISMRLRVQRGRGYVPASARLHTDDEDRPIGRLLLDAAFSPVVRIAYNVEAARVEQRTDLDKLVIDMETNGTLDPEEAIRRAATILAEQLDAFVDLRDVSVPEKKEDKPEFDPILLRPVDDLELTVRSANCLKAEAIHYIGDLVQRTEVELLKTPNLGKKSLTEIKDVLASRGLSLGMRLENWPPASLADN.

Positions 1–235 are alpha N-terminal domain (alpha-NTD); that stretch reads MLGSVTDFLK…EQLDAFVDLR (235 aa). Residues 249-329 are alpha C-terminal domain (alpha-CTD); sequence FDPILLRPVD…NWPPASLADN (81 aa).

The protein belongs to the RNA polymerase alpha chain family. Homodimer. The RNAP catalytic core consists of 2 alpha, 1 beta, 1 beta' and 1 omega subunit. When a sigma factor is associated with the core the holoenzyme is formed, which can initiate transcription.

The catalysed reaction is RNA(n) + a ribonucleoside 5'-triphosphate = RNA(n+1) + diphosphate. In terms of biological role, DNA-dependent RNA polymerase catalyzes the transcription of DNA into RNA using the four ribonucleoside triphosphates as substrates. The chain is DNA-directed RNA polymerase subunit alpha from Tolumonas auensis (strain DSM 9187 / NBRC 110442 / TA 4).